A 286-amino-acid polypeptide reads, in one-letter code: Alpha/beta-gliadin (286 aa).

An N-terminal signal peptide occupies residues 1–20 (MKTFLILVLLAIVATTATTA). Residues 51–120 (LGQQQPFPPQ…QQPISQQQQQ (70 aa)) form a disordered region. The span at 56-71 (PFPPQQPYPQPQPFPS) shows a compositional bias: pro residues. Positions 72–92 (QLPYLQLQPFPQPQLPYSQPQ) are enriched in low complexity. A compositionally biased stretch (pro residues) spans 93 to 104 (PFRPQQPYPQPQ). The span at 105–120 (PQYSQPQQPISQQQQQ) shows a compositional bias: low complexity.

It belongs to the gliadin/glutenin family. In terms of processing, substrate of transglutaminase.

Its function is as follows. Gliadin is the major seed storage protein in wheat. The sequence is that of Alpha/beta-gliadin from Triticum aestivum (Wheat).